The chain runs to 90 residues: UPF0237 protein BL1209.1 (90 aa).

Residues 5–79 (IITVVGQDTV…DDIGVRIRCQ (75 aa)) enclose the ACT domain.

The protein belongs to the UPF0237 family.

The polypeptide is UPF0237 protein BL1209.1 (Bifidobacterium longum (strain NCC 2705)).